A 286-amino-acid polypeptide reads, in one-letter code: Carbohydrate-binding domain-containing protein Cthe_2159 (286 aa).

Positions 1 to 20 (MSIKKLILAASILTTLALTG) are cleaved as a signal peptide. A lipid anchor (N-palmitoyl cysteine) is attached at Cys21. A lipid anchor (S-diacylglycerol cysteine) is attached at Cys21. A polygalacturonic acid-binding region spans residues 124–225 (GKDNVLTDAE…GIKVENTEEP (102 aa)). Residues Arg152, Asp153, Asp154, Asn177, Asp178, Asp215, Asp243, Asp244, and Asp247 each contribute to the Ca(2+) site.

As to quaternary structure, monomer.

It localises to the cell membrane. Functionally, binds cellulosic and pectic substrates. Displays no enzyme activity (in vitro). The chain is Carbohydrate-binding domain-containing protein Cthe_2159 from Acetivibrio thermocellus (strain ATCC 27405 / DSM 1237 / JCM 9322 / NBRC 103400 / NCIMB 10682 / NRRL B-4536 / VPI 7372) (Clostridium thermocellum).